Here is a 79-residue protein sequence, read N- to C-terminus: Small ribosomal subunit protein bS18 (79 aa).

This sequence belongs to the bacterial ribosomal protein bS18 family. As to quaternary structure, part of the 30S ribosomal subunit. Forms a tight heterodimer with protein bS6.

Binds as a heterodimer with protein bS6 to the central domain of the 16S rRNA, where it helps stabilize the platform of the 30S subunit. The polypeptide is Small ribosomal subunit protein bS18 (Pseudarthrobacter chlorophenolicus (strain ATCC 700700 / DSM 12829 / CIP 107037 / JCM 12360 / KCTC 9906 / NCIMB 13794 / A6) (Arthrobacter chlorophenolicus)).